Here is a 289-residue protein sequence, read N- to C-terminus: ATP synthase gamma chain (289 aa).

The protein belongs to the ATPase gamma chain family. As to quaternary structure, F-type ATPases have 2 components, CF(1) - the catalytic core - and CF(0) - the membrane proton channel. CF(1) has five subunits: alpha(3), beta(3), gamma(1), delta(1), epsilon(1). CF(0) has three main subunits: a, b and c.

The protein resides in the cell inner membrane. Produces ATP from ADP in the presence of a proton gradient across the membrane. The gamma chain is believed to be important in regulating ATPase activity and the flow of protons through the CF(0) complex. The chain is ATP synthase gamma chain from Haemophilus influenzae (strain PittGG).